The following is a 177-amino-acid chain: MSRVAKNPVKLPSGVEVKLVGQLLSVKGAKGTLELNIHSSVEVVVEAGELRFVARNGDQQTRAMAGTTRALVNNMVQGVSQGFERKLQLVGVGYKAQAKGTVLNLALGFSHPVDYELPNGITAETPSQTDILIRGIDKQLVGQVAAEIRDFRRPEPYKGKGVRYADEVVRRKEAKKK.

Belongs to the universal ribosomal protein uL6 family. Part of the 50S ribosomal subunit.

Its function is as follows. This protein binds to the 23S rRNA, and is important in its secondary structure. It is located near the subunit interface in the base of the L7/L12 stalk, and near the tRNA binding site of the peptidyltransferase center. The protein is Large ribosomal subunit protein uL6 of Pseudomonas syringae pv. syringae (strain B728a).